The primary structure comprises 480 residues: Peptidase S41 family protein ustP (480 aa).

The tract at residues 78-97 is disordered; sequence CMPNKKSRPPDPRPSLAVGK. The segment at 134-336 is peptidase S41 domain; it reads DVAVLQLPTF…LKQQGVRSIV (203 aa).

Belongs to the peptidase S41A family.

It participates in mycotoxin biosynthesis. In terms of biological role, peptidase S41 family protein; part of the gene cluster that mediates the biosynthesis of the secondary metabolite ustiloxin B, an antimitotic tetrapeptide. First, ustA is processed by the subtilisin-like endoprotease Kex2 that is outside the ustiloxin B gene cluster, at the C-terminal side of Arg-Lys, after transfer to Golgi apparatus through the endoplasmic reticulum (ER). Cleavage by KEX2 generates 16 peptides YAIG-I to YAIG-XVI. To process the precursor peptide further, at least two peptidases are necessary to cleave the N-terminal and C-terminal sides of the Tyr-Ala-Ile-Gly core peptide which serves as backbone for the synthesis of ustiloxin B, through cyclization and modification of the tyrosine with a non-protein coding amino acid, norvaline. One of the two peptidases must be the serine peptidase ustP; and the other pepdidase is probably ustH. Macrocyclization of the core peptide derived from ustA requires the tyrosinase ustQ, as well as the homologous oxidases ustYa and ustYb, and leads to the production of the first cyclization product N-desmethylustiloxin F. For the formation of N-desmethylustiloxin F, three oxidation steps are required, hydroxylation at the benzylic position, hydroxylation at either the aromatic ring of Tyr or beta-position of Ile, and oxidative cyclization. UstQ may catalyze the oxidation of a phenol moiety, whereas the ustYa and ustYb are most likely responsible for the remaining two-step oxidations. N-desmethylustiloxin F is then methylated by ustM to yield ustiloxin F which in turn substrate of the cytochrome P450 monooxygenase ustC which catalyzes the formation of S-deoxyustiloxin H. The flavoprotein monooxygenases ustF1 and ustF2 then participate in the modification of the side chain of S-deoxyustiloxin H, leading to the synthesis of an oxime intermediate, via ustiloxin H. Finally, carboxylative dehydration performed by the cysteine desulfurase-like protein ustD yields ustiloxin B. This chain is Peptidase S41 family protein ustP, found in Aspergillus flavus (strain ATCC 200026 / FGSC A1120 / IAM 13836 / NRRL 3357 / JCM 12722 / SRRC 167).